The primary structure comprises 26 residues: Metallothionein (26 aa).

Low complexity predominate over residues 1–14; the sequence is MGDCGCSGASSCNC. The interval 1–26 is disordered; the sequence is MGDCGCSGASSCNCGSGCSCSNCGSK. The Cu(+) site is built by C4, C6, C12, C14, C18, C20, and C23. Cys residues predominate over residues 15-26; the sequence is GSGCSCSNCGSK.

It belongs to the metallothionein superfamily. Type 8 family.

This is Metallothionein (cmt) from Neurospora crassa (strain ATCC 24698 / 74-OR23-1A / CBS 708.71 / DSM 1257 / FGSC 987).